The sequence spans 277 residues: MAATSQVLTAIARRLEGKVALITGGASGIGETTAKLFSQHGAKVAIADVQDELGHSVVEAIGTSNSTYIHCDVTNEDGVKNAVDNTVSTYGKLDIMFSNAGISDPNRPRIIDNEKADFERVFSVNVTGVFLCMKHAARVMIPARSGNIISTASLSSTMGGGSSHAYCGSKHAVLGLTRNLAVELGQFGIRVNCLSPFGLPTALGKKFSGIKNEEEFENVINFAGNLKGPKFNVEDVANAALYLASDEAKYVSGHNLFIDGGFSVCNSVIKVFQYPDS.

NAD(+)-binding positions include 24–29, Asp-48, Val-73, and Asn-99; that span reads GGASGI. Ser-163 lines the substrate pocket. Tyr-166 functions as the Proton donor/acceptor in the catalytic mechanism. Lys-170 is an NAD(+) binding site.

Belongs to the short-chain dehydrogenases/reductases (SDR) family. Homotetramer.

The catalysed reaction is (-)-secoisolariciresinol + 2 NAD(+) = (-)-matairesinol + 2 NADH + 2 H(+). Its function is as follows. Oxidoreductase involved in lignan biosynthesis. Catalyzes the stereospecific conversion of (-)-secoisolariciresinol to (-)-matairesinol via a lactol intermediate. The protein is Secoisolariciresinol dehydrogenase of Forsythia intermedia (Border forsythia).